A 115-amino-acid chain; its full sequence is Pro-neuregulin-4, membrane-bound isoform (115 aa).

Residues 1 to 62 (MPTDHEQPCG…SSIPSESNLS (62 aa)) are Extracellular-facing. Residues 5–46 (HEQPCGPRHRSFCLNGGICYVIPTIPSPFCRCIENYTGARCE) form the EGF-like domain. 3 cysteine pairs are disulfide-bonded: Cys-9–Cys-23, Cys-17–Cys-34, and Cys-36–Cys-45. Asn-39 and Asn-60 each carry an N-linked (GlcNAc...) asparagine glycan. A helical membrane pass occupies residues 63 to 83 (AAFVVLAVLLTLTIAALCFLC). Residues 84-115 (RKGHLQRASSVQCEISLVETNNTRTRHSHREH) are Cytoplasmic-facing.

It belongs to the neuregulin family. In terms of assembly, interacts with ERBB4. Post-translationally, proteolytic cleavage close to the plasma membrane on the external face leads to the release of the soluble growth factor form. Extensive glycosylation precedes the proteolytic cleavage. In terms of tissue distribution, highly expressed in pancreas; weakly expressed in muscle.

It localises to the cell membrane. Its subcellular location is the secreted. In terms of biological role, low affinity ligand for the ERBB4 tyrosine kinase receptor. Concomitantly recruits ERBB1 and ERBB2 coreceptors, resulting in ligand-stimulated tyrosine phosphorylation and activation of the ERBB receptors. Does not bind to the ERBB1, ERBB2 and ERBB3 receptors. This chain is Pro-neuregulin-4, membrane-bound isoform (Nrg4), found in Mus musculus (Mouse).